Consider the following 599-residue polypeptide: Putative sensor histidine kinase NtrY-like (599 aa).

The next 4 helical transmembrane spans lie at 17–37, 44–64, 85–105, and 285–305; these read ILIL…FYVI, FSTI…LGIL, IVIA…VFSV, and IMFI…GVLF. The 55-residue stretch at 307 to 361 folds into the HAMP domain; that stretch reads AKIVKPIKKLVTATDKVKDGDLTVQVPENEVDKDEIGTLYAAFNRMIKQLSRQQR. The Histidine kinase domain maps to 378–589; the sequence is KVAHEIKNPL…IIDIKFDLKE (212 aa). His381 bears the Phosphohistidine; by autocatalysis mark.

The protein localises to the cell membrane. It carries out the reaction ATP + protein L-histidine = ADP + protein N-phospho-L-histidine.. Functionally, member of the two-component regulatory system RP614/RP562. The chain is Putative sensor histidine kinase NtrY-like from Rickettsia prowazekii (strain Madrid E).